Consider the following 156-residue polypeptide: ATP synthase subunit b (156 aa).

A helical transmembrane segment spans residues 7 to 27; it reads LFAQMVVFLILAWFTMKFVWP.

It belongs to the ATPase B chain family. As to quaternary structure, F-type ATPases have 2 components, F(1) - the catalytic core - and F(0) - the membrane proton channel. F(1) has five subunits: alpha(3), beta(3), gamma(1), delta(1), epsilon(1). F(0) has three main subunits: a(1), b(2) and c(10-14). The alpha and beta chains form an alternating ring which encloses part of the gamma chain. F(1) is attached to F(0) by a central stalk formed by the gamma and epsilon chains, while a peripheral stalk is formed by the delta and b chains.

It localises to the cell inner membrane. Functionally, f(1)F(0) ATP synthase produces ATP from ADP in the presence of a proton or sodium gradient. F-type ATPases consist of two structural domains, F(1) containing the extramembraneous catalytic core and F(0) containing the membrane proton channel, linked together by a central stalk and a peripheral stalk. During catalysis, ATP synthesis in the catalytic domain of F(1) is coupled via a rotary mechanism of the central stalk subunits to proton translocation. Its function is as follows. Component of the F(0) channel, it forms part of the peripheral stalk, linking F(1) to F(0). The sequence is that of ATP synthase subunit b from Paraburkholderia xenovorans (strain LB400).